The following is a 335-amino-acid chain: Protein CBP3, mitochondrial (335 aa).

A mitochondrion-targeting transit peptide spans 1–38 (MMSVNRFTSGRLPVFLRKSPFYYSRAYLHQTCVFKQNK). The chain crosses the membrane as a helical span at residues 152–169 (TFSQWFQITVLHEWILFV).

It belongs to the CBP3 family.

Its subcellular location is the mitochondrion membrane. Functionally, chaperone required for the assembly of ubiquinol-cytochrome c reductase of the mitochondrial respiratory chain. The protein is Protein CBP3, mitochondrial (CBP3) of Saccharomyces cerevisiae (strain ATCC 204508 / S288c) (Baker's yeast).